Here is a 128-residue protein sequence, read N- to C-terminus: Fluoride-specific ion channel FluC (128 aa).

The next 4 helical transmembrane spans lie at 4-24 (VFLL…VSTW), 35-55 (FGIL…WSIA), 67-87 (FLFT…LDTM), and 99-119 (LLNV…GIIL). Na(+)-binding residues include G74 and T77.

This sequence belongs to the fluoride channel Fluc/FEX (TC 1.A.43) family.

It localises to the cell inner membrane. It carries out the reaction fluoride(in) = fluoride(out). Na(+) is not transported, but it plays an essential structural role and its presence is essential for fluoride channel function. Functionally, fluoride-specific ion channel. Important for reducing fluoride concentration in the cell, thus reducing its toxicity. The chain is Fluoride-specific ion channel FluC from Parabacteroides distasonis (strain ATCC 8503 / DSM 20701 / CIP 104284 / JCM 5825 / NCTC 11152).